Consider the following 255-residue polypeptide: Kallikrein-4 (255 aa).

An N-terminal signal peptide occupies residues 1–25; that stretch reads MMVTARTPWGWFLGCLILEVTGASA. Residues 26-31 constitute a propeptide that is removed on maturation; the sequence is SSVSSR. Residues 32–253 enclose the Peptidase S1 domain; that stretch reads IIQGQDCSPH…FTNWIQTIIQ (222 aa). Residue His41 participates in Zn(2+) binding. A disulfide bridge links Cys57 with Cys73. His72 (charge relay system) is an active-site residue. Position 92 (Glu92) interacts with Zn(2+). The active-site Charge relay system is Asp117. N-linked (GlcNAc...) asparagine glycans are attached at residues Asn124 and Asn170. Cystine bridges form between Cys149–Cys214, Cys179–Cys193, and Cys204–Cys229. Ser208 (charge relay system) is an active-site residue.

This sequence belongs to the peptidase S1 family. Kallikrein subfamily. Post-translationally, N-glycosylated. The N-glycan structures are of complex diantennary or triantennary type, which may be further modified with up to 2 sialic acid residues.

It localises to the secreted. In terms of biological role, has a major role in enamel formation. Required during the maturation stage of tooth development for clearance of enamel proteins and normal structural patterning of the crystalline matrix. This chain is Kallikrein-4, found in Mus musculus (Mouse).